The sequence spans 309 residues: Homoserine O-succinyltransferase (309 aa).

The Acyl-thioester intermediate role is filled by cysteine 142. Substrate is bound by residues lysine 163 and serine 192. Histidine 235 acts as the Proton acceptor in catalysis. Glutamate 237 is an active-site residue. Arginine 249 contributes to the substrate binding site.

The protein belongs to the MetA family.

The protein localises to the cytoplasm. It carries out the reaction L-homoserine + succinyl-CoA = O-succinyl-L-homoserine + CoA. It participates in amino-acid biosynthesis; L-methionine biosynthesis via de novo pathway; O-succinyl-L-homoserine from L-homoserine: step 1/1. In terms of biological role, transfers a succinyl group from succinyl-CoA to L-homoserine, forming succinyl-L-homoserine. This chain is Homoserine O-succinyltransferase, found in Proteus mirabilis (strain HI4320).